Consider the following 246-residue polypeptide: Probable phosphatase Ssed_2939 (246 aa).

Zn(2+) contacts are provided by histidine 8, histidine 10, histidine 16, histidine 41, glutamate 74, histidine 102, histidine 132, aspartate 193, and histidine 195.

Belongs to the PHP family. Zn(2+) is required as a cofactor.

This chain is Probable phosphatase Ssed_2939, found in Shewanella sediminis (strain HAW-EB3).